We begin with the raw amino-acid sequence, 278 residues long: tRNA (guanine-N(7)-)-methyltransferase (278 aa).

The disordered stretch occupies residues 1–42; that stretch reads MRHDGPMHVQPGVGLQSDTSSSTGTGSGPADEPEAEKSAWGY. S-adenosyl-L-methionine contacts are provided by Glu106, Glu131, Asn160, and Asp183. The active site involves Asp183. Substrate is bound by residues Lys187, Asp219, and 256-259; that span reads TKYE.

It belongs to the class I-like SAM-binding methyltransferase superfamily. TrmB family.

The enzyme catalyses guanosine(46) in tRNA + S-adenosyl-L-methionine = N(7)-methylguanosine(46) in tRNA + S-adenosyl-L-homocysteine. It participates in tRNA modification; N(7)-methylguanine-tRNA biosynthesis. Its function is as follows. Catalyzes the formation of N(7)-methylguanine at position 46 (m7G46) in tRNA. The protein is tRNA (guanine-N(7)-)-methyltransferase of Mycobacterium ulcerans (strain Agy99).